A 545-amino-acid polypeptide reads, in one-letter code: 2-succinyl-5-enolpyruvyl-6-hydroxy-3-cyclohexene-1-carboxylate synthase (545 aa).

The segment at 184–209 (PLVPDPEPHGAPTPAGRPGGRPWTYT) is disordered. Residues 195–205 (PTPAGRPGGRP) show a composition bias toward low complexity.

It belongs to the TPP enzyme family. MenD subfamily. In terms of assembly, homodimer. The cofactor is Mg(2+). Requires Mn(2+) as cofactor. It depends on thiamine diphosphate as a cofactor.

It catalyses the reaction isochorismate + 2-oxoglutarate + H(+) = 5-enolpyruvoyl-6-hydroxy-2-succinyl-cyclohex-3-ene-1-carboxylate + CO2. Its pathway is quinol/quinone metabolism; 1,4-dihydroxy-2-naphthoate biosynthesis; 1,4-dihydroxy-2-naphthoate from chorismate: step 2/7. It functions in the pathway quinol/quinone metabolism; menaquinone biosynthesis. Its function is as follows. Catalyzes the thiamine diphosphate-dependent decarboxylation of 2-oxoglutarate and the subsequent addition of the resulting succinic semialdehyde-thiamine pyrophosphate anion to isochorismate to yield 2-succinyl-5-enolpyruvyl-6-hydroxy-3-cyclohexene-1-carboxylate (SEPHCHC). The protein is 2-succinyl-5-enolpyruvyl-6-hydroxy-3-cyclohexene-1-carboxylate synthase of Mycobacterium avium (strain 104).